The chain runs to 177 residues: uncharacterized protein (177 aa).

Low complexity-rich tracts occupy residues 78–93 and 120–130; these read NNNN…NTNN and SDVNSNNNNGN. The interval 78 to 146 is disordered; the sequence is NNNNNNNNTI…NKKLKKDGTN (69 aa). Residues 131 to 146 show a composition bias toward basic residues; the sequence is HQKKKINKKLKKDGTN.

This is an uncharacterized protein from Dictyostelium discoideum (Social amoeba).